Consider the following 311-residue polypeptide: Mycinamicin-resistance protein MyrB (311 aa).

Positions 27, 29, 54, 75, and 98 each coordinate S-adenosyl-L-methionine. A disordered region spans residues 272-311; the sequence is PAPAGRSVRARPGSVGPDRSLPPRGLRSGPPRARRRGGGA. Positions 293-302 are enriched in low complexity; sequence PPRGLRSGPP.

Belongs to the class I-like SAM-binding methyltransferase superfamily. rRNA adenine N(6)-methyltransferase family.

Its function is as follows. Confers resistance to macrolide, lincosamide and streptogramin B antibiotics. In Micromonospora griseorubida, this protein is Mycinamicin-resistance protein MyrB (myrB).